Here is a 519-residue protein sequence, read N- to C-terminus: Mannosyl-oligosaccharide alpha-1,2-mannosidase (519 aa).

Residues 1-22 (MKGSPVLAVCAAALTLIPSVVA) form the signal peptide. An N-linked (GlcNAc...) asparagine glycan is attached at Asn187. Cys337 and Cys366 are disulfide-bonded. The Proton donor role is filled by Glu380. An N-linked (GlcNAc...) asparagine glycan is attached at Asn443. Thr507 is a Ca(2+) binding site.

It belongs to the glycosyl hydrolase 47 family. In terms of assembly, monomer. It depends on Ca(2+) as a cofactor. Mg(2+) is required as a cofactor.

It localises to the secreted. It catalyses the reaction N(4)-(alpha-D-Man-(1-&gt;2)-alpha-D-Man-(1-&gt;2)-alpha-D-Man-(1-&gt;3)-[alpha-D-Man-(1-&gt;2)-alpha-D-Man-(1-&gt;3)-[alpha-D-Man-(1-&gt;2)-alpha-D-Man-(1-&gt;6)]-alpha-D-Man-(1-&gt;6)]-beta-D-Man-(1-&gt;4)-beta-D-GlcNAc-(1-&gt;4)-beta-D-GlcNAc)-L-asparaginyl-[protein] (N-glucan mannose isomer 9A1,2,3B1,2,3) + 4 H2O = N(4)-(alpha-D-Man-(1-&gt;3)-[alpha-D-Man-(1-&gt;3)-[alpha-D-Man-(1-&gt;6)]-alpha-D-Man-(1-&gt;6)]-beta-D-Man-(1-&gt;4)-beta-D-GlcNAc-(1-&gt;4)-beta-D-GlcNAc)-L-asparaginyl-[protein] (N-glucan mannose isomer 5A1,2) + 4 beta-D-mannose. The catalysed reaction is N(4)-(alpha-D-Man-(1-&gt;2)-alpha-D-Man-(1-&gt;2)-alpha-D-Man-(1-&gt;3)-[alpha-D-Man-(1-&gt;3)-[alpha-D-Man-(1-&gt;2)-alpha-D-Man-(1-&gt;6)]-alpha-D-Man-(1-&gt;6)]-beta-D-Man-(1-&gt;4)-beta-D-GlcNAc-(1-&gt;4)-beta-D-GlcNAc)-L-asparaginyl-[protein] (N-glucan mannose isomer 8A1,2,3B1,3) + 3 H2O = N(4)-(alpha-D-Man-(1-&gt;3)-[alpha-D-Man-(1-&gt;3)-[alpha-D-Man-(1-&gt;6)]-alpha-D-Man-(1-&gt;6)]-beta-D-Man-(1-&gt;4)-beta-D-GlcNAc-(1-&gt;4)-beta-D-GlcNAc)-L-asparaginyl-[protein] (N-glucan mannose isomer 5A1,2) + 3 beta-D-mannose. Its pathway is protein modification; protein glycosylation. In terms of biological role, alpha-mannosidase involved in the maturation of Asn-linked oligosaccharides. Progressively trims alpha-1,2-linked mannose residues from Man(9)GlcNAc(2) to produce Man(5)GlcNAc(2). The chain is Mannosyl-oligosaccharide alpha-1,2-mannosidase from Coccidioides posadasii (strain RMSCC 757 / Silveira) (Valley fever fungus).